Reading from the N-terminus, the 122-residue chain is Large ribosomal subunit protein uL14c (122 aa).

The protein belongs to the universal ribosomal protein uL14 family. As to quaternary structure, part of the 50S ribosomal subunit.

Its subcellular location is the plastid. The protein resides in the chloroplast. In terms of biological role, binds to 23S rRNA. This Capsella bursa-pastoris (Shepherd's purse) protein is Large ribosomal subunit protein uL14c.